A 312-amino-acid polypeptide reads, in one-letter code: Acetyl-coenzyme A carboxylase carboxyl transferase subunit alpha (312 aa).

Positions 36–286 constitute a CoA carboxyltransferase C-terminal domain; the sequence is NLEKEISKTY…ADYVKKSLNE (251 aa).

Belongs to the AccA family. In terms of assembly, acetyl-CoA carboxylase is a heterohexamer composed of biotin carboxyl carrier protein (AccB), biotin carboxylase (AccC) and two subunits each of ACCase subunit alpha (AccA) and ACCase subunit beta (AccD).

It localises to the cytoplasm. The catalysed reaction is N(6)-carboxybiotinyl-L-lysyl-[protein] + acetyl-CoA = N(6)-biotinyl-L-lysyl-[protein] + malonyl-CoA. It functions in the pathway lipid metabolism; malonyl-CoA biosynthesis; malonyl-CoA from acetyl-CoA: step 1/1. Functionally, component of the acetyl coenzyme A carboxylase (ACC) complex. First, biotin carboxylase catalyzes the carboxylation of biotin on its carrier protein (BCCP) and then the CO(2) group is transferred by the carboxyltransferase to acetyl-CoA to form malonyl-CoA. This Campylobacter jejuni subsp. jejuni serotype O:23/36 (strain 81-176) protein is Acetyl-coenzyme A carboxylase carboxyl transferase subunit alpha.